The primary structure comprises 290 residues: MSAVTPALVKELRDRTGLGMMECKKALGDANGDIELAIENLRKVSGLKAAKKEGRTAADGVVAVKVAADNSYGVAVEVNSETDFVARDAGFLAFVNSVVEKAFAAKQTDVAAVMAGELEIAREALVQKIGEKISVRRINLVEGGVVGGYVHLNNRIAVLVQLEGGSEDVAKDVAMHVAAVNPQVVSADQMPADVVEKEKEIIRAQPDMAGKPAEIVEKMIVGRISKFLKEASLVDQPFVKNPEQTVAQFAKAGGATVKSFVRLEVGEGIEVAVVDFAAEVAAQVAASAKS.

Residues threonine 82–valine 85 form an involved in Mg(2+) ion dislocation from EF-Tu region.

Belongs to the EF-Ts family.

It localises to the cytoplasm. In terms of biological role, associates with the EF-Tu.GDP complex and induces the exchange of GDP to GTP. It remains bound to the aminoacyl-tRNA.EF-Tu.GTP complex up to the GTP hydrolysis stage on the ribosome. This Cellvibrio japonicus (strain Ueda107) (Pseudomonas fluorescens subsp. cellulosa) protein is Elongation factor Ts.